The sequence spans 510 residues: 2-isopropylmalate synthase (510 aa).

In terms of domain architecture, Pyruvate carboxyltransferase spans 5-267 (LVIFDTTLRD…DTRIDTTQIV (263 aa)). Mn(2+) contacts are provided by Asp14, His202, His204, and Asn238. The regulatory domain stretch occupies residues 392 to 510 (RLLSLVAHSE…SSLERTHPQV (119 aa)).

The protein belongs to the alpha-IPM synthase/homocitrate synthase family. LeuA type 1 subfamily. Homodimer. Requires Mn(2+) as cofactor.

It is found in the cytoplasm. The enzyme catalyses 3-methyl-2-oxobutanoate + acetyl-CoA + H2O = (2S)-2-isopropylmalate + CoA + H(+). Its pathway is amino-acid biosynthesis; L-leucine biosynthesis; L-leucine from 3-methyl-2-oxobutanoate: step 1/4. Catalyzes the condensation of the acetyl group of acetyl-CoA with 3-methyl-2-oxobutanoate (2-ketoisovalerate) to form 3-carboxy-3-hydroxy-4-methylpentanoate (2-isopropylmalate). The sequence is that of 2-isopropylmalate synthase from Nitrosomonas eutropha (strain DSM 101675 / C91 / Nm57).